The primary structure comprises 287 residues: Ferredoxin-type protein NapH (287 aa).

The Cytoplasmic portion of the chain corresponds to Met-1–Arg-29. Residues Leu-30–Leu-50 traverse the membrane as a helical segment. Residues His-51–His-79 lie on the Periplasmic side of the membrane. Residues Leu-80 to Gly-100 traverse the membrane as a helical segment. The Cytoplasmic portion of the chain corresponds to Lys-101–Tyr-139. The chain crosses the membrane as a helical span at residues Val-140–Ile-160. Topologically, residues Asn-161–Leu-170 are periplasmic. Residues Val-171–Val-191 traverse the membrane as a helical segment. Residues Val-192 to Ser-287 are Cytoplasmic-facing. 2 4Fe-4S ferredoxin-type domains span residues Thr-217 to Leu-247 and Ser-251 to Arg-280. Residues Cys-226, Cys-229, Cys-232, Cys-236, Cys-260, Cys-263, Cys-266, and Cys-270 each coordinate [4Fe-4S] cluster.

In terms of assembly, interacts with NapC. The cofactor is [4Fe-4S] cluster.

The protein resides in the cell inner membrane. Functionally, required for electron transfer from ubiquinol, via NapC, to the periplasmic nitrate reductase NapAB complex. This is Ferredoxin-type protein NapH (napH) from Escherichia coli (strain K12).